The following is a 309-amino-acid chain: Putative S-adenosyl-L-methionine-dependent methyltransferase Mvan_0104 (309 aa).

S-adenosyl-L-methionine is bound by residues Asp134 and 163–164; that span reads DL.

The protein belongs to the UPF0677 family.

Exhibits S-adenosyl-L-methionine-dependent methyltransferase activity. This Mycolicibacterium vanbaalenii (strain DSM 7251 / JCM 13017 / BCRC 16820 / KCTC 9966 / NRRL B-24157 / PYR-1) (Mycobacterium vanbaalenii) protein is Putative S-adenosyl-L-methionine-dependent methyltransferase Mvan_0104.